The sequence spans 293 residues: Probable xyloglucan endotransglucosylase/hydrolase protein 5 (293 aa).

An N-terminal signal peptide occupies residues 1-21 (MGRLSSTLCLTFLILATVAFG). In terms of domain architecture, GH16 spans 23-220 (PPKKSINVPF…WEKAPFVASY (198 aa)). Catalysis depends on Glu-106, which acts as the Nucleophile. Glu-110 acts as the Proton donor in catalysis. Glu-110 contacts xyloglucan. N-linked (GlcNAc...) asparagine glycosylation is present at Asn-114. Xyloglucan-binding positions include 123–125 (QTN), 133–135 (NRE), 199–200 (DW), and Gly-204. Intrachain disulfides connect Cys-228–Cys-237 and Cys-274–Cys-287. Arg-279 contacts xyloglucan.

This sequence belongs to the glycosyl hydrolase 16 family. XTH group 1 subfamily. Post-translationally, contains at least one intrachain disulfide bond essential for its enzymatic activity. As to expression, root specific.

The protein localises to the secreted. Its subcellular location is the cell wall. It localises to the extracellular space. The protein resides in the apoplast. The catalysed reaction is breaks a beta-(1-&gt;4) bond in the backbone of a xyloglucan and transfers the xyloglucanyl segment on to O-4 of the non-reducing terminal glucose residue of an acceptor, which can be a xyloglucan or an oligosaccharide of xyloglucan.. Catalyzes xyloglucan endohydrolysis (XEH) and/or endotransglycosylation (XET). Cleaves and religates xyloglucan polymers, an essential constituent of the primary cell wall, and thereby participates in cell wall construction of growing tissues. This is Probable xyloglucan endotransglucosylase/hydrolase protein 5 (XTH5) from Arabidopsis thaliana (Mouse-ear cress).